The chain runs to 304 residues: Non-specific ribonucleoside hydrolase RihC (304 aa).

His233 is a catalytic residue.

It belongs to the IUNH family. RihC subfamily.

Functionally, hydrolyzes both purine and pyrimidine ribonucleosides with a broad-substrate specificity. The chain is Non-specific ribonucleoside hydrolase RihC from Escherichia fergusonii (strain ATCC 35469 / DSM 13698 / CCUG 18766 / IAM 14443 / JCM 21226 / LMG 7866 / NBRC 102419 / NCTC 12128 / CDC 0568-73).